Reading from the N-terminus, the 858-residue chain is MDLPALLPAPTARGGQHGGGPGPLRRAPAPLGASPARRRLLLVRGPEDGGPGARPGEASGPSPPPAEDDSDGDSFLVLLEVPHGGAAAEAAGSQEAEPGSRVNLASRPEQGPSGPAAPPGPGVAPAGAVTISSQDLLVRLDRGVLALSAPPGPATAGAAAPRRAPQASGPSTPGYRCPEPQCALAFAKKHQLKVHLLTHGGGQGRRPFKCPLEGCGWAFTTSYKLKRHLQSHDKLRPFGCPVGGCGKKFTTVYNLKAHMKGHEQESLFKCEVCAERFPTHAKLSSHQRSHFEPERPYKCDFPGCEKTFITVSALFSHNRAHFREQELFSCSFPGCSKQYDKACRLKIHLRSHTGERPFICDSDSCGWTFTSMSKLLRHRRKHDDDRRFTCPVEGCGKSFTRAEHLKGHSITHLGTKPFECPVEGCCARFSARSSLYIHSKKHVQDVGAPKSRCPVSTCNRLFTSKHSMKAHMVRQHSRRQDLLPQLEAPSSLTPSSELSSPGQSELTNMDLAALFSDTPANASGSAGGSDEALNSGILTIDVTSVSSSLGGNLPANNSSLGPMEPLVLVAHSDIPPSLDSPLVLGTAATVLQQGSFSVDDVQTVSAGALGCLVALPMKNLSDDPLALTSNSNLAAHITTPTSSSTPRENASVPELLAPIKVEPDSPSRPGAVGQQEGSHGLPQSTLPSPAEQHGAQDTELSAGTGNFYLESGGSARTDYRAIQLAKEKKQRGAGSNAGASQSTQRKIKEGKMSPPHFHASQNSWLCGSLVVPSGGRPGPAPAAGVQCGAQGVQVQLVQDDPSGEGVLPSARGPATFLPFLTVDLPVYVLQEVLPSSGGPAGPEATQFPGSTINLQDLQ.

Disordered regions lie at residues 1–127 (MDLP…APAG) and 151–174 (PGPATAGAAAPRRAPQASGPSTPG). Composition is skewed to low complexity over residues 23-35 (PLRRAPAPLGASP), 84-97 (GGAAAEAAGSQEAE), and 151-171 (PGPATAGAAAPRRAPQASGPS). Serine 34 is modified (phosphoserine). Residue threonine 172 is modified to Phosphothreonine. 10 consecutive C2H2-type zinc fingers follow at residues 175-199 (YRCPEPQCALAFAKKHQLKVHLLTH), 208-232 (FKCPLEGCGWAFTTSYKLKRHLQSH), 238-262 (FGCPVGGCGKKFTTVYNLKAHMKGH), 268-290 (FKCEVCAERFPTHAKLSSHQRSH), 297-321 (YKCDFPGCEKTFITVSALFSHNRAH), 328-352 (FSCSFPGCSKQYDKACRLKIHLRSH), 358-382 (FICDSDSCGWTFTSMSKLLRHRRKH), 388-412 (FTCPVEGCGKSFTRAEHLKGHSITH), 418-442 (FECPVEGCCARFSARSSLYIHSKKH), and 451-476 (SRCPVSTCNRLFTSKHSMKAHMVRQH). A required for transcriptional activation region spans residues 579 to 688 (DSPLVLGTAA…HGLPQSTLPS (110 aa)). Residue lysine 660 forms a Glycyl lysine isopeptide (Lys-Gly) (interchain with G-Cter in SUMO) linkage. Disordered regions lie at residues 660 to 696 (KVEPDSPSRPGAVGQQEGSHGLPQSTLPSPAEQHGAQ), 726 to 756 (KEKKQRGAGSNAGASQSTQRKIKEGKMSPPH), and 837 to 858 (GGPAGPEATQFPGSTINLQDLQ). Serine 665 is subject to Phosphoserine. Positions 675 to 687 (QEGSHGLPQSTLP) are enriched in polar residues. The interval 781–858 (PAAGVQCGAQ…GSTINLQDLQ (78 aa)) is interaction with CIITA. The segment covering 847–858 (FPGSTINLQDLQ) has biased composition (polar residues).

The protein belongs to the ZXD family. As to quaternary structure, self-associates. Interacts with ZXDA and CIITA. Post-translationally, sumoylated at Lys-660 with SUMO1, SUMO2 and SUMO3; sumoylation enhances the activity of the transcriptional activation domain. In terms of tissue distribution, expressed at high levels in heart, kidney, liver and testis, at moderate levels in brain and stomach, and at low levels in lung, muscle, placenta, small intestine and spleen.

It is found in the nucleus. In terms of biological role, cooperates with CIITA to promote transcription of MHC class I and MHC class II genes. This chain is Zinc finger protein ZXDC (ZXDC), found in Homo sapiens (Human).